The primary structure comprises 263 residues: uncharacterized protein (263 aa).

31 to 38 (GPTGSGKT) is a binding site for ATP.

Belongs to the CbbQ/NirQ/NorQ/GpvN family.

This is an uncharacterized protein from Staphylococcus aureus (strain bovine RF122 / ET3-1).